Here is a 277-residue protein sequence, read N- to C-terminus: MAIVKMKPTSAGRRGMVRVVTEGLYKGAPYAPLLEKKNSTAGRNNNGHITTRHKGGGHKHHYRVVDFKRNKDGIPAKVERIEYDPNRTAFIALLCYADGERRYIIAPRGIQAGAVLVSGAEAAIKVGNTLPIRNIPVGTTIHCIEMKPGKGAQIARSAGASAVLLAKEGAYAQVRLRSGEVRKINVDCRATIGEVGNEEQSLKKIGKAGANRWRGIRPTVRGVVMNPVDHPHGGGEGRTGEAREPVSPWGTPAKGYRTRNNKRTDNMIVRRRYSNKG.

Disordered regions lie at residues 37–60 (KNST…GHKH) and 223–264 (VVMN…NKRT). A compositionally biased stretch (polar residues) spans 39–49 (STAGRNNNGHI). Residues 50–60 (TTRHKGGGHKH) show a composition bias toward basic residues. Residues 229–244 (DHPHGGGEGRTGEARE) are compositionally biased toward basic and acidic residues.

This sequence belongs to the universal ribosomal protein uL2 family. In terms of assembly, part of the 50S ribosomal subunit. Forms a bridge to the 30S subunit in the 70S ribosome.

One of the primary rRNA binding proteins. Required for association of the 30S and 50S subunits to form the 70S ribosome, for tRNA binding and peptide bond formation. It has been suggested to have peptidyltransferase activity; this is somewhat controversial. Makes several contacts with the 16S rRNA in the 70S ribosome. The protein is Large ribosomal subunit protein uL2 of Neisseria meningitidis serogroup B (strain ATCC BAA-335 / MC58).